The following is a 226-amino-acid chain: Cytidylate kinase (226 aa).

10–18 serves as a coordination point for ATP; that stretch reads GPASSGKST.

This sequence belongs to the cytidylate kinase family. Type 1 subfamily.

It localises to the cytoplasm. It carries out the reaction CMP + ATP = CDP + ADP. It catalyses the reaction dCMP + ATP = dCDP + ADP. The chain is Cytidylate kinase from Streptococcus thermophilus (strain CNRZ 1066).